A 374-amino-acid polypeptide reads, in one-letter code: Multicilin (374 aa).

The stretch at 164–212 (EQYWRDVADHNQKALGDALVENNQLQVSLTEKQEEIVSLKEKNIQLNEL) forms a coiled coil. Positions 230–260 (RTKQNSGATQGRLPVKRSLEDFYPQSNEPDS) are disordered. Residues 330–374 (TDLEDVSFRTSIKEHSTIRTLAFPQGNAFTIRTSGGGYKFRWVPN) are TIRT domain.

It belongs to the geminin family. As to quaternary structure, component of the EDM complex, at least composed of e2f4, e2f5, mcidas and tfdp1. Expressed in multiciliate differentiating cells. Expression is lost by stage 26, when multiciliate cells in the skin are fully differentiated, but is then detected in the developing nephrostomes of the kidneys where multiciliate cells form at later stages.

The protein localises to the nucleus. Functionally, transcription regulator specifically required for multiciliate cell differentiation. Acts in a multiprotein complex containing E2F4 and E2F5 that binds and activates genes required for centriole biogenesis. Activates genes required for centriole assembly (plk4, cep152) and genes specifically required for motile cilia formation (foxj1). Also promotes the deuterosome pathway of centriole biogenesis by activating expression of ccdc67/deup1, but not its paralog cep63. The protein is Multicilin (mcidas) of Xenopus laevis (African clawed frog).